The sequence spans 700 residues: Calpain-2 catalytic subunit (700 aa).

Ala2 bears the N-acetylalanine mark. The propeptide at 2–19 (AGIAAKLVKDREAAEGLG) is anchors to the small subunit. The 300-residue stretch at 45–344 (LFQDPSFPAI…YSRLEICNLT (300 aa)) folds into the Calpain catalytic domain. The Ca(2+) site is built by Ile89, Gly91, and Asp96. The active site involves Cys105. 3 residues coordinate Ca(2+): Glu175, Gln229, and Lys230. Active-site residues include His262 and Asn286. Positions 292, 299, and 323 each coordinate Ca(2+). The domain III stretch occupies residues 345-514 (PDTLTSDTYK…KKADYQAVDD (170 aa)). Residues 515–529 (EIEANLEEFDISEDD) are linker. The segment at 530 to 700 (IDDGFRRLFA…LISWLCFSVL (171 aa)) is domain IV. Ca(2+) is bound by residues Ala542, Asp545, Glu547, Glu552, Asp585, Asp587, Ser589, Lys591, Glu596, Asp615, Asp617, Ser619, Thr621, Glu626, Asp658, and Asn661. EF-hand domains are found at residues 572 to 605 (FSIETCKIMVDMLDSDGSGKLGLKEFYILWTKIQ) and 602 to 637 (TKIQKYQKIYREIDVDRSGTMNSYEMRKALEEAGFK). One can recognise an EF-hand 3 domain in the interval 667–700 (VRLETLFKIFKQLDPENTGTIELDLISWLCFSVL).

It belongs to the peptidase C2 family. In terms of assembly, forms a heterodimer with a small (regulatory) subunit (CAPNS1). Interacts with CPEB3; this leads to cleavage of CPEB3. The cofactor is Ca(2+).

Its subcellular location is the cytoplasm. It localises to the cell membrane. It carries out the reaction Broad endopeptidase specificity.. Activated by 200-1000 micromolar concentrations of calcium and inhibited by calpastatin. Its function is as follows. Calcium-regulated non-lysosomal thiol-protease which catalyzes limited proteolysis of substrates involved in cytoskeletal remodeling and signal transduction. Proteolytically cleaves MYOC at 'Arg-226'. Proteolytically cleaves CPEB3 following neuronal stimulation which abolishes CPEB3 translational repressor activity, leading to translation of CPEB3 target mRNAs. This chain is Calpain-2 catalytic subunit (CAPN2), found in Macaca fascicularis (Crab-eating macaque).